Reading from the N-terminus, the 338-residue chain is Ferredoxin--NADP reductase (338 aa).

7 residues coordinate FAD: aspartate 38, glutamine 46, tyrosine 51, valine 91, phenylalanine 125, aspartate 291, and threonine 331.

This sequence belongs to the ferredoxin--NADP reductase type 2 family. As to quaternary structure, homodimer. FAD is required as a cofactor.

It carries out the reaction 2 reduced [2Fe-2S]-[ferredoxin] + NADP(+) + H(+) = 2 oxidized [2Fe-2S]-[ferredoxin] + NADPH. The protein is Ferredoxin--NADP reductase of Orientia tsutsugamushi (strain Ikeda) (Rickettsia tsutsugamushi).